The following is a 140-amino-acid chain: MSRKWLNKVKWDDHGLVPVIVQEQGSNDVLMFAFMNREALQKTVETGEAVFWSRSRKRLWHKGEESGHIQQVHEIRLDCDEDVVLLRVTQVGGIACHTGRHACFFQKFEGTAEDGDWHTVEPVLKNPDDIYAGKPGHNHE.

Asp78 serves as a coordination point for Mg(2+). Cys79 is a binding site for Zn(2+). Mg(2+) contacts are provided by Asp80 and Asp82. 2 residues coordinate Zn(2+): Cys96 and Cys103.

This sequence belongs to the PRA-CH family. Homodimer. It depends on Mg(2+) as a cofactor. Zn(2+) serves as cofactor.

It is found in the cytoplasm. It carries out the reaction 1-(5-phospho-beta-D-ribosyl)-5'-AMP + H2O = 1-(5-phospho-beta-D-ribosyl)-5-[(5-phospho-beta-D-ribosylamino)methylideneamino]imidazole-4-carboxamide. It functions in the pathway amino-acid biosynthesis; L-histidine biosynthesis; L-histidine from 5-phospho-alpha-D-ribose 1-diphosphate: step 3/9. Catalyzes the hydrolysis of the adenine ring of phosphoribosyl-AMP. In Ralstonia nicotianae (strain ATCC BAA-1114 / GMI1000) (Ralstonia solanacearum), this protein is Phosphoribosyl-AMP cyclohydrolase.